The primary structure comprises 208 residues: Ribosomal RNA small subunit methyltransferase G (208 aa).

Residues Gly-77, Leu-82, 128–129 (VE), and Arg-142 each bind S-adenosyl-L-methionine.

The protein belongs to the methyltransferase superfamily. RNA methyltransferase RsmG family.

The protein localises to the cytoplasm. It catalyses the reaction guanosine(527) in 16S rRNA + S-adenosyl-L-methionine = N(7)-methylguanosine(527) in 16S rRNA + S-adenosyl-L-homocysteine. In terms of biological role, specifically methylates the N7 position of guanine in position 527 of 16S rRNA. In Chromohalobacter salexigens (strain ATCC BAA-138 / DSM 3043 / CIP 106854 / NCIMB 13768 / 1H11), this protein is Ribosomal RNA small subunit methyltransferase G.